Here is a 684-residue protein sequence, read N- to C-terminus: Glycine--tRNA ligase beta subunit (684 aa).

It belongs to the class-II aminoacyl-tRNA synthetase family. Tetramer of two alpha and two beta subunits.

The protein resides in the cytoplasm. It carries out the reaction tRNA(Gly) + glycine + ATP = glycyl-tRNA(Gly) + AMP + diphosphate. This is Glycine--tRNA ligase beta subunit from Pseudomonas fluorescens (strain ATCC BAA-477 / NRRL B-23932 / Pf-5).